Consider the following 162-residue polypeptide: Phospholipase A and acyltransferase 2 (162 aa).

Residues 1–133 (MALARPRPRL…VSRSDQVTGA (133 aa)) lie on the Cytoplasmic side of the membrane. An LRAT domain is found at 13–129 (LIEISRFGYA…LRYGVSRSDQ (117 aa)). Residues histidine 23 and histidine 35 contribute to the active site. The Acyl-thioester intermediate role is filled by cysteine 113. The chain crosses the membrane as a helical span at residues 134 to 154 (VTTVGVAAGLLAAASLVGILL). Topologically, residues 155-162 (ARSKRERQ) are lumenal.

This sequence belongs to the H-rev107 family. In terms of tissue distribution, expressed in liver, kidney, small intestine testis and colon. Undetectable in testis, placenta, salivary gland and fetal brain.

The protein resides in the cytoplasm. It is found in the membrane. The catalysed reaction is a 1,2-diacyl-sn-glycero-3-phosphocholine + H2O = a 1-acyl-sn-glycero-3-phosphocholine + a fatty acid + H(+). It carries out the reaction a 1,2-diacyl-sn-glycero-3-phosphocholine + H2O = a 2-acyl-sn-glycero-3-phosphocholine + a fatty acid + H(+). It catalyses the reaction a 1,2-diacyl-sn-glycero-3-phosphoethanolamine + a 1,2-diacyl-sn-glycero-3-phosphocholine = an N-acyl-1,2-diacyl-sn-glycero-3-phosphoethanolamine + a 1-acyl-sn-glycero-3-phosphocholine + H(+). The enzyme catalyses a 1,2-diacyl-sn-glycero-3-phosphoethanolamine + a 1,2-diacyl-sn-glycero-3-phosphocholine = an N-acyl-1,2-diacyl-sn-glycero-3-phosphoethanolamine + a 2-acyl-sn-glycero-3-phosphocholine + H(+). The catalysed reaction is 1,2-dihexadecanoyl-sn-glycero-3-phosphocholine + H2O = 1-hexadecanoyl-sn-glycero-3-phosphocholine + hexadecanoate + H(+). It carries out the reaction 1,2-dihexadecanoyl-sn-glycero-3-phosphocholine + H2O = 2-hexadecanoyl-sn-glycero-3-phosphocholine + hexadecanoate + H(+). It catalyses the reaction 1-hexadecanoyl-2-(9Z-octadecenoyl)-sn-glycero-3-phosphocholine + H2O = 2-(9Z-octadecenoyl)-sn-glycero-3-phosphocholine + hexadecanoate + H(+). The enzyme catalyses 1-hexadecanoyl-2-(9Z-octadecenoyl)-sn-glycero-3-phosphocholine + H2O = 1-hexadecanoyl-sn-glycero-3-phosphocholine + (9Z)-octadecenoate + H(+). The catalysed reaction is 1-hexadecanoyl-2-(5Z,8Z,11Z,14Z-eicosatetraenoyl)-sn-glycero-3-phosphocholine + H2O = 2-(5Z,8Z,11Z,14Z)-eicosatetraenoyl-sn-glycero-3-phosphocholine + hexadecanoate + H(+). It carries out the reaction 1-hexadecanoyl-2-(9Z,12Z-octadecadienoyl)-sn-glycero-3-phosphoethanolamine + H2O = 1-hexadecanoyl-sn-glycero-3-phosphoethanolamine + (9Z,12Z)-octadecadienoate + H(+). It catalyses the reaction 1-hexadecanoyl-2-(9Z,12Z-octadecadienoyl)-sn-glycero-3-phosphoethanolamine + H2O = 2-(9Z,12Z)-octadecadienoyl-sn-glycero-3-phosphoethanolamine + hexadecanoate + H(+). The enzyme catalyses 1-hexadecanoyl-2-(5Z,8Z,11Z,14Z-eicosatetraenoyl)-sn-glycero-3-phosphoethanolamine + H2O = 1-hexadecanoyl-sn-glycero-3-phosphoethanolamine + (5Z,8Z,11Z,14Z)-eicosatetraenoate + H(+). The catalysed reaction is 1-hexadecanoyl-2-(5Z,8Z,11Z,14Z-eicosatetraenoyl)-sn-glycero-3-phosphoethanolamine + H2O = 2-(5Z,8Z,11Z,14Z)-eicosatetraenoyl-sn-glycero-3-phosphoethanolamine + hexadecanoate + H(+). It carries out the reaction 1,2-di-(9Z-octadecenoyl)-sn-glycero-3-phosphoethanolamine + 1,2-dihexadecanoyl-sn-glycero-3-phosphocholine = N-hexadecanoyl-1,2-di-(9Z-octadecenoyl)-sn-glycero-3-phosphoethanolamine + 2-hexadecanoyl-sn-glycero-3-phosphocholine + H(+). It catalyses the reaction 1,2-di-(9Z-octadecenoyl)-sn-glycero-3-phosphoethanolamine + 1,2-dihexadecanoyl-sn-glycero-3-phosphocholine = N-hexadecanoyl-1,2-di-(9Z-octadecenoyl)-sn-glycero-3-phosphoethanolamine + 1-hexadecanoyl-sn-glycero-3-phosphocholine + H(+). The enzyme catalyses 1-hexanoyl-2-acyl-sn-glycero-3-phosphocholine + H2O = 1-hexanoyl-sn-glycero-3-phosphocholine + a fatty acid + H(+). The catalysed reaction is 1,2-diheptadecanoyl-sn-glycero-3-phosphoethanolamine + 1-(9Z-octadecenoyl)-2-hexadecanoyl-sn-glycero-3-phosphocholine = 1,2-diheptadecanoyl-sn-glycero-3-phospho-N-hexadecanoyl-ethanolamine + 1-(9Z-octadecenoyl)-sn-glycero-3-phosphocholine + H(+). It carries out the reaction 1,2-diheptadecanoyl-sn-glycero-3-phosphoethanolamine + 1-(9Z-octadecenoyl)-2-hexadecanoyl-sn-glycero-3-phosphocholine = 1,2-diheptadecanoyl-sn-glycero-3-phospho-N-(9Z-octadecenoyl)-ethanolamine + 2-hexadecanoyl-sn-glycero-3-phosphocholine + H(+). It catalyses the reaction 1,2-dihexanoyl-sn-glycero-3-phosphocholine + 1,2-diheptanoyl-sn-glycero-3-phosphocholine = 1-heptanoyl-2-hexanoyl-sn-glycero-3-phosphocholine + 1-hexanoyl-2-heptanoyl-sn-glycero-3-phosphocholine. The enzyme catalyses 1,2-diheptanoyl-sn-glycero-3-phosphocholine + 1,2-dihexadecanoyl-sn-glycero-3-phosphocholine = 1-hexadecanoyl-2-heptanoyl-sn-glycero-3-phosphocholine + 1-heptanoyl-2-hexadecanoyl-sn-glycero-3-phosphocholine. The catalysed reaction is 1,2-dihexanoyl-sn-glycero-3-phosphoethanolamine + 1,2-diheptanoyl-sn-glycero-3-phosphocholine = 1-heptanoyl-2-hexanoyl-sn-glycero-3-phosphoethanolamine + 1-hexanoyl-2-heptanoyl-sn-glycero-3-phosphocholine. It carries out the reaction 1-hexanoyl-2-acyl-sn-glycero-3-phosphocholine + H2O = hexanoate + a 2-acyl-sn-glycero-3-phosphocholine + H(+). It catalyses the reaction 1,2-dihexanoyl-sn-glycero-3-phosphoethanolamine + 2-heptanoyl-sn-glycero-3-phosphocholine = hexanoyl-sn-glycero-3-phosphoethanolamine + 1-hexanoyl-2-heptanoyl-sn-glycero-3-phosphocholine. Its function is as follows. Exhibits both phospholipase A1/2 and acyltransferase activities. Shows phospholipase A1 (PLA1) and A2 (PLA2) activity, catalyzing the calcium-independent release of fatty acids from the sn-1 or sn-2 position of glycerophospholipids. For most substrates, PLA1 activity is much higher than PLA2 activity. Shows O-acyltransferase activity, catalyzing the transfer of a fatty acyl group from glycerophospholipid to the hydroxyl group of lysophospholipid. Shows N-acyltransferase activity, catalyzing the calcium-independent transfer of a fatty acyl group at the sn-1 position of phosphatidylcholine (PC) and other glycerophospholipids to the primary amine of phosphatidylethanolamine (PE), forming N-acylphosphatidylethanolamine (NAPE), which serves as precursor for N-acylethanolamines (NAEs). Catalyzes N-acylation of PE using both sn-1 and sn-2 palmitoyl groups of PC as acyl donor. Exhibits high phospholipase A1/2 activity and low N-acyltransferase activity. The sequence is that of Phospholipase A and acyltransferase 2 from Homo sapiens (Human).